We begin with the raw amino-acid sequence, 124 residues long: Putative calmodulin-3 (124 aa).

EF-hand domains follow at residues Gly-1–Asn-18, Pro-19–Asp-54, Asp-56–Lys-91, and Leu-92–Lys-124. The Ca(2+) site is built by Cys-2, Glu-7, Asp-32, Asp-34, Asn-36, Thr-38, Glu-43, Asp-69, Asp-71, Asn-73, and Glu-80. At Lys-91 the chain carries N6,N6,N6-trimethyllysine. Asp-105, Asp-107, Asp-109, Gln-111, and Glu-116 together coordinate Ca(2+).

Belongs to the calmodulin family. As to expression, not detected in the organs tested.

In terms of biological role, calmodulin mediates the control of a large number of enzymes, ion channels and other proteins by Ca(2+). Among the enzymes to be stimulated by the calmodulin-Ca(2+) complex are a number of protein kinases and phosphatases. This Solanum tuberosum (Potato) protein is Putative calmodulin-3 (PCM3).